We begin with the raw amino-acid sequence, 365 residues long: G-protein coupled receptor 68 (365 aa).

Residues 1–12 (MGNITADNSSMS) are Extracellular-facing. N-linked (GlcNAc...) asparagine glycans are attached at residues Asn3 and Asn8. The chain crosses the membrane as a helical span at residues 13-49 (CTIDHTIHQTLAPVVYVTVLVVGFPANCLSLYFGYLQ). Disulfide bonds link Cys13–Cys258 and Cys94–Cys172. At 50–53 (IKAR) the chain is on the cytoplasmic side. Residues 54-84 (NELGVYLCNLTVADLFYICSLPFWLQYVLQH) form a helical membrane-spanning segment. Topologically, residues 85 to 89 (DNWSH) are extracellular. The helical transmembrane segment at 90-125 (GDLSCQVCGILLYENIYISVGFLCCISVDRYLAVAH) threads the bilayer. The Cytoplasmic segment spans residues 126 to 133 (PFRFHQFR). Residues 134–160 (TLKAAVGVSVVIWAKELLTSIYFLMHE) form a helical membrane-spanning segment. Residues 161-176 (EVIEDENQHRVCFEHY) are Extracellular-facing. Positions 161–176 (EVIEDENQHRVCFEHY) are extracellular loop 2 (ECL2). A helical transmembrane segment spans residues 177 to 214 (PIQAWQRAINYYRFLVGFLFPICLLLASYQGILRAVRR). The Cytoplasmic portion of the chain corresponds to 215–218 (SHGT). Residues 219-254 (QKSRKDQIQRLVLSTVVIFLACFLPYHVLLLVRSVW) form a helical membrane-spanning segment. Topologically, residues 255–260 (EASCDF) are extracellular. The helical transmembrane segment at 261–289 (AKGVFNAYHFSLLLTSFNCVADPVLYCFV) threads the bilayer. Over 290-365 (SETTHRDLAR…SGGFPTGRLA (76 aa)) the chain is Cytoplasmic. Residues 345–365 (HPAFQTPNSPGSGGFPTGRLA) are disordered. Positions 355 to 365 (GSGGFPTGRLA) are enriched in gly residues.

This sequence belongs to the G-protein coupled receptor 1 family. As to expression, found at low level in a wide range of tissues, but significantly expressed in lung, kidney, bone and nervous system.

Its subcellular location is the cell membrane. With respect to regulation, activated by a network of residues that connects an extracellular-facing cavity to Glu-149, a conserved charged residue buried in the transmembrane core of the receptor. Protonation likely drives conformational changes in extracellular loop 2 (ECL2), which stabilizes movement of transmembrane 3 (TM3) and a series of rearrangements that connect the extracellular-facing cavity to Glu-149, a residue only conserved in proton-sensing G-protein coupled receptors. Activated in an allosteric manner by divalent metal ions at the extracellular surface following the order: Cd(2+) &gt; Co(2+) &gt; Ni(2+) &gt; Zn(2+) &gt; Fe(2+) &gt; Ca(2+) &gt; Mg(2+). Activated by the benzodiazepine drug lorazepam, a non-selective GPR68 positive allosteric modulator. Activated by ogerin (ZINC67740571), a selective GPR68 positive allosteric modulator. Activated by small molecule MS48107, a selective positive allosteric modulator. Inhibited by small molecule ogremorphin, inducing ferroptosis in cancer cells. Proton-sensing G-protein coupled receptor activated by extracellular pH, which is required to monitor pH changes and generate adaptive reactions. The receptor is almost silent at pH 7.8 but fully activated at pH 6.8. Ligand binding causes a conformation change that triggers signaling via guanine nucleotide-binding proteins (G proteins) and modulates the activity of downstream effectors, such as phospholipase C. GPR68 is mainly coupled to G(q) G proteins and mediates production of diacylglycerol (DAG) and inositol 1,4,5-trisphosphate (IP3). Acts as a key mechanosensor of fluid shear stress and membrane stretch. Expressed in endothelial cells of small-diameter resistance arteries, where it mediates flow-induced dilation in response to shear stress. May represents an osteoblastic pH sensor regulating cell-mediated responses to acidosis in bone. Acts as a regulator of calcium-sensing receptor CASR in a seesaw manner: GPR68-mediated signaling inhibits CASR signaling in response to protons, while CASR inhibits GPR68 in presence of extracellular calcium. The polypeptide is G-protein coupled receptor 68 (Homo sapiens (Human)).